We begin with the raw amino-acid sequence, 212 residues long: Imidazole glycerol phosphate synthase subunit HisH (212 aa).

A Glutamine amidotransferase type-1 domain is found at 3-212; the sequence is DVAIIDYGMG…MLANFISWAP (210 aa). Residue C82 is the Nucleophile of the active site. Catalysis depends on residues H192 and E194.

Heterodimer of HisH and HisF.

The protein resides in the cytoplasm. The catalysed reaction is 5-[(5-phospho-1-deoxy-D-ribulos-1-ylimino)methylamino]-1-(5-phospho-beta-D-ribosyl)imidazole-4-carboxamide + L-glutamine = D-erythro-1-(imidazol-4-yl)glycerol 3-phosphate + 5-amino-1-(5-phospho-beta-D-ribosyl)imidazole-4-carboxamide + L-glutamate + H(+). It catalyses the reaction L-glutamine + H2O = L-glutamate + NH4(+). Its pathway is amino-acid biosynthesis; L-histidine biosynthesis; L-histidine from 5-phospho-alpha-D-ribose 1-diphosphate: step 5/9. In terms of biological role, IGPS catalyzes the conversion of PRFAR and glutamine to IGP, AICAR and glutamate. The HisH subunit catalyzes the hydrolysis of glutamine to glutamate and ammonia as part of the synthesis of IGP and AICAR. The resulting ammonia molecule is channeled to the active site of HisF. This is Imidazole glycerol phosphate synthase subunit HisH from Aromatoleum aromaticum (strain DSM 19018 / LMG 30748 / EbN1) (Azoarcus sp. (strain EbN1)).